The chain runs to 484 residues: MDYFKTSIDQLHEQLRSGKVTSSQLVDETLAGINQLDAEVDAFLALNADGAKEKAAAVDAAGIADDQPLAGVPIAIKDNIVTKGVVTTAASKMLANFNPIYDATVMQKLDAAGAINVGKTNMDEFAMGSSTENSAFKTTKNAWDHTRVPGGSSGGSAAAVAAGEVIAALGSDTGGSIRQPAAFNGIVGVKPTYGRVSRWGLIAFSSSLDQIGTLTRHVKDAAQLLNVIAGHDERDSTTADTPVPDFTAKIGQDIKGMKIALPKEYLGKGVDPAVADKIKAAAKQFEDMGATVTEVSLPHTQYAVPSYYIIASSEASSNLQRFDGIRYGFRAKDVKNIEDVYVRSRSEGFGPEVKRRIMLGTFSLSAGFYDAYFKKAGQVRTLITRDFEDVFKDYDLIIGPTTPTVAFKIGEKVTDPVTMYMNDILTIPVNLAGLPAASVPAGFVDGMPVGLQLIGKHFDESTIFQVAAAFEAQNDYLAQIPGGK.

Residues Lys-77 and Ser-152 each act as charge relay system in the active site. Catalysis depends on Ser-176, which acts as the Acyl-ester intermediate.

The protein belongs to the amidase family. GatA subfamily. In terms of assembly, heterotrimer of A, B and C subunits.

It carries out the reaction L-glutamyl-tRNA(Gln) + L-glutamine + ATP + H2O = L-glutaminyl-tRNA(Gln) + L-glutamate + ADP + phosphate + H(+). Functionally, allows the formation of correctly charged Gln-tRNA(Gln) through the transamidation of misacylated Glu-tRNA(Gln) in organisms which lack glutaminyl-tRNA synthetase. The reaction takes place in the presence of glutamine and ATP through an activated gamma-phospho-Glu-tRNA(Gln). The chain is Glutamyl-tRNA(Gln) amidotransferase subunit A from Lacticaseibacillus casei (strain BL23) (Lactobacillus casei).